The chain runs to 438 residues: Phosphoribosylamine--glycine ligase (438 aa).

One can recognise an ATP-grasp domain in the interval 108 to 316 (REFMERNDIP…LVEIAEGIVK (209 aa)). An ATP-binding site is contributed by 135-194 (IDEYGKPVVVKPLGLTGGKGVKVVGYQLKDNEEAKEYAEYLIKKDGKVLIEERTDGVEFT). Mg(2+)-binding residues include Q274, E286, and N288. Positions 274, 286, and 288 each coordinate Mn(2+).

Belongs to the GARS family. Mg(2+) serves as cofactor. Mn(2+) is required as a cofactor.

The catalysed reaction is 5-phospho-beta-D-ribosylamine + glycine + ATP = N(1)-(5-phospho-beta-D-ribosyl)glycinamide + ADP + phosphate + H(+). Its pathway is purine metabolism; IMP biosynthesis via de novo pathway; N(1)-(5-phospho-D-ribosyl)glycinamide from 5-phospho-alpha-D-ribose 1-diphosphate: step 2/2. The polypeptide is Phosphoribosylamine--glycine ligase (Pyrococcus abyssi (strain GE5 / Orsay)).